Here is a 155-residue protein sequence, read N- to C-terminus: Peptidyl-prolyl cis-trans isomerase ppi1 (155 aa).

The 154-residue stretch at 1–154 (MANVELQTSL…EPLKIIKAVA (154 aa)) folds into the PPIase cyclophilin-type domain.

The protein belongs to the cyclophilin-type PPIase family. PPIL1 subfamily. In terms of assembly, interacts with cwf13/snw1.

It carries out the reaction [protein]-peptidylproline (omega=180) = [protein]-peptidylproline (omega=0). Functionally, PPIases accelerate the folding of proteins. It catalyzes the cis-trans isomerization of proline imidic peptide bonds in oligopeptides. The polypeptide is Peptidyl-prolyl cis-trans isomerase ppi1 (ppi1) (Schizosaccharomyces pombe (strain 972 / ATCC 24843) (Fission yeast)).